Here is a 216-residue protein sequence, read N- to C-terminus: MNESTINTVLFDLDGTLINTNELIIASFQHTLDHYYPGQYSREEILHFIGPSLFDTFSAMDPDLTDDMIQMYRTFNHEQHDLLVTEYETVLDTLKVLQDRGFKLGIVTTKIRDTVLMGLKLTGLEPFFEVIVTLDDVQNEKPHPEPVQLALSKLGSDPHEAVMVGDNYHDILSGQAAGTKTAGVAWSIKGEEALFKHRPDFMLKKMSDLLAIVGAD.

Asp12 serves as the catalytic Nucleophile.

Belongs to the HAD-like hydrolase superfamily. PpaX family. Mg(2+) is required as a cofactor.

The catalysed reaction is diphosphate + H2O = 2 phosphate + H(+). Hydrolyzes pyrophosphate formed during P-Ser-HPr dephosphorylation by HPrK/P. Might play a role in controlling the intracellular pyrophosphate pool. This is Pyrophosphatase PpaX from Bacillus pumilus (strain SAFR-032).